Consider the following 244-residue polypeptide: Thiol S-methyltransferase TMT1B (244 aa).

Positions 1–23 (MDILVPLLQLLVLLLTLPLHLMA) are cleaved as a signal peptide.

Belongs to the methyltransferase superfamily. In terms of tissue distribution, expressed in the liver.

It localises to the endoplasmic reticulum membrane. The protein localises to the lipid droplet. The protein resides in the microsome. Its subcellular location is the cytoplasm. It is found in the cytosol. The enzyme catalyses a thiol + S-adenosyl-L-methionine = a methyl thioether + S-adenosyl-L-homocysteine + H(+). Its function is as follows. Thiol S-methyltransferase that catalyzes the transfer of a methyl group from S-adenosyl-L-methionine to alkyl and phenolic thiol-containing acceptor substrates. Together with TMT1B accounts for most of S-thiol methylation activity in the endoplasmic reticulum of hepatocytes. Selectively methylates S-centered nucleophiles from metabolites such as hydrogen sulfide and dithiothreitol. The polypeptide is Thiol S-methyltransferase TMT1B (Homo sapiens (Human)).